The primary structure comprises 102 residues: Putative pterin-4-alpha-carbinolamine dehydratase (102 aa).

This sequence belongs to the pterin-4-alpha-carbinolamine dehydratase family.

It carries out the reaction (4aS,6R)-4a-hydroxy-L-erythro-5,6,7,8-tetrahydrobiopterin = (6R)-L-erythro-6,7-dihydrobiopterin + H2O. The chain is Putative pterin-4-alpha-carbinolamine dehydratase from Burkholderia ambifaria (strain ATCC BAA-244 / DSM 16087 / CCUG 44356 / LMG 19182 / AMMD) (Burkholderia cepacia (strain AMMD)).